The sequence spans 1020 residues: Sodium/potassium-transporting ATPase subunit alpha-2 (1020 aa).

A propeptide spanning residues Met-1–Ala-5 is cleaved from the precursor. Residues Met-1–Asp-31 are disordered. Residues Gly-6–Pro-85 are Cytoplasmic-facing. Phosphoserine is present on Ser-10. The interaction with phosphoinositide-3 kinase stretch occupies residues Pro-80–Pro-82. The chain crosses the membrane as a helical span at residues Glu-86–Ala-106. Residues Ile-107 to Tyr-129 are Extracellular-facing. Residues Leu-130–Ala-150 form a helical membrane-spanning segment. At Lys-151–Ile-286 the chain is on the cytoplasmic side. The segment covering Asp-212–Pro-227 has biased composition (polar residues). Residues Asp-212 to His-231 form a disordered region. Residues Glu-287–Val-306 form a helical membrane-spanning segment. Residues Leu-307–Ala-318 lie on the Extracellular side of the membrane. The helical transmembrane segment at Val-319 to Ala-336 threads the bilayer. The Cytoplasmic segment spans residues Thr-337–Leu-769. The active-site 4-aspartylphosphate intermediate is the Asp-374. Ser-439, Ser-450, and Ser-559 each carry phosphoserine. The residue at position 570 (Thr-570) is a Phosphothreonine. Phosphoserine occurs at positions 587 and 672. Mg(2+) is bound by residues Asp-714 and Asp-718. The chain crosses the membrane as a helical span at residues Lys-770–Leu-789. Over Phe-790–Leu-799 the chain is Extracellular. The chain crosses the membrane as a helical span at residues Gly-800 to Ala-820. Residues Tyr-821 to Lys-840 are Cytoplasmic-facing. Ser-826 carries the phosphoserine modification. Residues Leu-841–Phe-863 traverse the membrane as a helical segment. The Extracellular segment spans residues Phe-864–Cys-915. The chain crosses the membrane as a helical span at residues His-916–Lys-935. Residues Thr-936 to Asn-948 lie on the Cytoplasmic side of the membrane. Ser-940 bears the Phosphoserine; by PKA mark. A helical transmembrane segment spans residues Lys-949–Tyr-967. The Extracellular portion of the chain corresponds to Cys-968 to Val-982. Residues Thr-983–Lys-1003 traverse the membrane as a helical segment. Residues Leu-1004 to Tyr-1020 are Cytoplasmic-facing.

Belongs to the cation transport ATPase (P-type) (TC 3.A.3) family. Type IIC subfamily. In terms of assembly, the sodium/potassium-transporting ATPase is composed of a catalytic alpha subunit, an auxiliary non-catalytic beta subunit and an additional regulatory subunit. Interacts with regulatory subunit FXYD1.

It is found in the membrane. Its subcellular location is the cell membrane. The catalysed reaction is K(+)(out) + Na(+)(in) + ATP + H2O = K(+)(in) + Na(+)(out) + ADP + phosphate + H(+). In terms of biological role, this is the catalytic component of the active enzyme, which catalyzes the hydrolysis of ATP coupled with the exchange of sodium and potassium ions across the plasma membrane. This action creates the electrochemical gradient of sodium and potassium, providing the energy for active transport of various nutrients. This is Sodium/potassium-transporting ATPase subunit alpha-2 (ATP1A2) from Sus scrofa (Pig).